Consider the following 199-residue polypeptide: Recombination protein RecR (199 aa).

The segment at 58 to 73 (CSVCGNLTDTDVCPLC) adopts a C4-type zinc-finger fold. A Toprim domain is found at 81–176 (SVICVVEDPR…KTTRIAHGIP (96 aa)).

This sequence belongs to the RecR family.

Its function is as follows. May play a role in DNA repair. It seems to be involved in an RecBC-independent recombinational process of DNA repair. It may act with RecF and RecO. The sequence is that of Recombination protein RecR from Acetivibrio thermocellus (strain ATCC 27405 / DSM 1237 / JCM 9322 / NBRC 103400 / NCIMB 10682 / NRRL B-4536 / VPI 7372) (Clostridium thermocellum).